A 366-amino-acid chain; its full sequence is UDP-N-acetylglucosamine--N-acetylmuramyl-(pentapeptide) pyrophosphoryl-undecaprenol N-acetylglucosamine transferase (366 aa).

Residues 10–12 (TGG), asparagine 124, arginine 165, serine 192, isoleucine 247, and glutamine 292 contribute to the UDP-N-acetyl-alpha-D-glucosamine site.

The protein belongs to the glycosyltransferase 28 family. MurG subfamily.

It localises to the cell inner membrane. The enzyme catalyses di-trans,octa-cis-undecaprenyl diphospho-N-acetyl-alpha-D-muramoyl-L-alanyl-D-glutamyl-meso-2,6-diaminopimeloyl-D-alanyl-D-alanine + UDP-N-acetyl-alpha-D-glucosamine = di-trans,octa-cis-undecaprenyl diphospho-[N-acetyl-alpha-D-glucosaminyl-(1-&gt;4)]-N-acetyl-alpha-D-muramoyl-L-alanyl-D-glutamyl-meso-2,6-diaminopimeloyl-D-alanyl-D-alanine + UDP + H(+). Its pathway is cell wall biogenesis; peptidoglycan biosynthesis. In terms of biological role, cell wall formation. Catalyzes the transfer of a GlcNAc subunit on undecaprenyl-pyrophosphoryl-MurNAc-pentapeptide (lipid intermediate I) to form undecaprenyl-pyrophosphoryl-MurNAc-(pentapeptide)GlcNAc (lipid intermediate II). In Geotalea daltonii (strain DSM 22248 / JCM 15807 / FRC-32) (Geobacter daltonii), this protein is UDP-N-acetylglucosamine--N-acetylmuramyl-(pentapeptide) pyrophosphoryl-undecaprenol N-acetylglucosamine transferase.